The following is a 457-amino-acid chain: Putative purine-cytosine permease YxlA (457 aa).

12 helical membrane-spanning segments follow: residues 24–44, 50–70, 90–110, 127–147, 164–184, 192–212, 228–248, 264–284, 316–336, 341–361, 392–412, and 420–440; these read FPVW…TIPV, LFWS…FMAS, FGVI…LGFF, IPGS…TIFG, AVFF…GSWI, IFLV…PYVA, FWYS…LGAL, IVQL…FGQM, IIMI…GQSN, FLNF…INLV, IAFV…FYIG, and GGDI…YVLM.

The protein belongs to the purine-cytosine permease (2.A.39) family.

The protein localises to the cell membrane. The polypeptide is Putative purine-cytosine permease YxlA (yxlA) (Bacillus subtilis (strain 168)).